The following is a 41-amino-acid chain: Mu-conotoxin pn4c (41 aa).

The propeptide occupies 1–24; sequence DQPAERMQDDISSEHHPFFDPVKR.

The protein belongs to the conotoxin M superfamily. In terms of processing, contains 3 disulfide bonds. They are not added, since framework IV presents two different connectivities (I-V, II-III, IV-VI and I-III, II-V, IV-VI). Expressed by the venom duct.

The protein localises to the secreted. Mu-conotoxins block voltage-gated sodium channels (Nav). Blocks reversibly sodium channels in molluskan neurons, but has no effect on sodium currents in bovine chromaffin cells or in rat brain synaptosomes. Induces paralysis in mollusks (C.retripictus). This Conus pennaceus (Feathered cone) protein is Mu-conotoxin pn4c.